Reading from the N-terminus, the 395-residue chain is Pyridinium-3,5-bisthiocarboxylic acid mononucleotide nickel insertion protein (395 aa).

It belongs to the LarC family.

The catalysed reaction is Ni(II)-pyridinium-3,5-bisthiocarboxylate mononucleotide = pyridinium-3,5-bisthiocarboxylate mononucleotide + Ni(2+). Functionally, involved in the biosynthesis of a nickel-pincer cofactor ((SCS)Ni(II) pincer complex). Binds Ni(2+), and functions in nickel delivery to pyridinium-3,5-bisthiocarboxylic acid mononucleotide (P2TMN), to form the mature cofactor. Is thus probably required for the activation of nickel-pincer cofactor-dependent enzymes. This is Pyridinium-3,5-bisthiocarboxylic acid mononucleotide nickel insertion protein from Staphylococcus epidermidis (strain ATCC 12228 / FDA PCI 1200).